Reading from the N-terminus, the 216-residue chain is Regulatory protein RecX (216 aa).

It belongs to the RecX family.

The protein resides in the cytoplasm. Modulates RecA activity. In Clostridium tetani (strain Massachusetts / E88), this protein is Regulatory protein RecX.